Here is a 593-residue protein sequence, read N- to C-terminus: CTD kinase subunit alpha (593 aa).

2 stretches are compositionally biased toward polar residues: residues 1–17 (MSYSKSTIYRRQGTEPN) and 29–51 (QLSGTNEESLGGHTLSSNAFKNN). Positions 1–262 (MSYSKSTIYR…ESVPAPLPSP (262 aa)) are disordered. Residues S56 and S58 each carry the phosphoserine modification. The segment covering 90-103 (RSRKSRRRKGKKAF) has biased composition (basic residues). Residues S104 and S109 each carry the phosphoserine modification. A compositionally biased stretch (low complexity) spans 139–152 (SSSSASVSPISPSA). Over residues 160–170 (QASSFRRSPPS) the composition is skewed to polar residues. Residues 198 to 215 (IPHETTSSDTQKKSSVSS) show a composition bias toward low complexity. One can recognise a Protein kinase domain in the interval 277-561 (YEKIDQIGEG…AHETLMHEYF (285 aa)). ATP contacts are provided by residues 283–291 (IGEGTYGKV) and K306. The Proton acceptor role is filled by D399.

The protein belongs to the protein kinase superfamily. CMGC Ser/Thr protein kinase family. CDC2/CDKX subfamily. As to quaternary structure, CTDK-I consists of three subunits, ctk1/lsk1, ctk2/lsc1 and ctk3 (also called alpha, beta and gamma). Interacts with ctk2/lsc1. This interaction is dependent on kinase activity.

The protein resides in the nucleus. It localises to the nucleolus. The catalysed reaction is [DNA-directed RNA polymerase] + ATP = phospho-[DNA-directed RNA polymerase] + ADP + H(+). Functionally, catalytic subunit of the CTDK-I complex, which hyperphosphorylates the C-terminal heptapeptide repeat domain (CTD) of the largest RNA polymerase II subunit. Involved in RNA polymerase II transcriptional elongation and pre-mRNA 3'-end processing. Together with ctk2/lsc1, required for the regulation of cytokinesis by phosphorylating 'Ser-2' residues found in the heptad repeats of the CTD. Required for nuclear localization of ctk2/lsc1. Positively regulates the septation initiation network (SIN) and promotes successful completion of cytokinesis in response to perturbation of the actomyosin ring. Acts in parallel to clp1 to promote actomyosin ring stability upon cytokinesis checkpoint activation. In Schizosaccharomyces pombe (strain 972 / ATCC 24843) (Fission yeast), this protein is CTD kinase subunit alpha.